Here is a 345-residue protein sequence, read N- to C-terminus: Inositol 2-dehydrogenase (345 aa).

It belongs to the Gfo/Idh/MocA family. Homotetramer.

It carries out the reaction myo-inositol + NAD(+) = scyllo-inosose + NADH + H(+). Involved in the oxidation of myo-inositol (MI) to 2-keto-myo-inositol (2KMI or 2-inosose). In Mycolicibacterium smegmatis (strain ATCC 700084 / mc(2)155) (Mycobacterium smegmatis), this protein is Inositol 2-dehydrogenase.